The chain runs to 106 residues: Large ribosomal subunit protein eL42 (106 aa).

The protein belongs to the eukaryotic ribosomal protein eL42 family.

This chain is Large ribosomal subunit protein eL42 (RPL44), found in Candida tropicalis (Yeast).